The chain runs to 321 residues: UPF0026 protein MJ1312 (321 aa).

One can recognise a Radical SAM core domain in the interval 11 to 236; the sequence is RRLGKSLGIN…AIFNEIIGKN (226 aa). [4Fe-4S] cluster contacts are provided by cysteine 27, cysteine 31, and cysteine 34.

This sequence belongs to the UPF0026 family. The cofactor is [4Fe-4S] cluster.

This is UPF0026 protein MJ1312 from Methanocaldococcus jannaschii (strain ATCC 43067 / DSM 2661 / JAL-1 / JCM 10045 / NBRC 100440) (Methanococcus jannaschii).